We begin with the raw amino-acid sequence, 343 residues long: Protein RecA (343 aa).

64-71 (GPESSGKT) provides a ligand contact to ATP.

This sequence belongs to the RecA family.

It is found in the cytoplasm. Its function is as follows. Can catalyze the hydrolysis of ATP in the presence of single-stranded DNA, the ATP-dependent uptake of single-stranded DNA by duplex DNA, and the ATP-dependent hybridization of homologous single-stranded DNAs. It interacts with LexA causing its activation and leading to its autocatalytic cleavage. This Acidiphilium cryptum (strain JF-5) protein is Protein RecA.